Here is a 476-residue protein sequence, read N- to C-terminus: Ribulose bisphosphate carboxylase large chain (476 aa).

Substrate-binding residues include N124 and T174. Residue K176 is the Proton acceptor of the active site. A substrate-binding site is contributed by K178. K202, D204, and E205 together coordinate Mg(2+). N6-carboxylysine is present on K202. Residue H295 is the Proton acceptor of the active site. Residues R296, H328, and S380 each contribute to the substrate site.

This sequence belongs to the RuBisCO large chain family. Type I subfamily. Heterohexadecamer of 8 large chains and 8 small chains; disulfide-linked. The disulfide link is formed within the large subunit homodimers. The cofactor is Mg(2+). The disulfide bond which can form in the large chain dimeric partners within the hexadecamer appears to be associated with oxidative stress and protein turnover.

The protein localises to the carboxysome. It carries out the reaction 2 (2R)-3-phosphoglycerate + 2 H(+) = D-ribulose 1,5-bisphosphate + CO2 + H2O. It catalyses the reaction D-ribulose 1,5-bisphosphate + O2 = 2-phosphoglycolate + (2R)-3-phosphoglycerate + 2 H(+). Its function is as follows. RuBisCO catalyzes two reactions: the carboxylation of D-ribulose 1,5-bisphosphate, the primary event in carbon dioxide fixation, as well as the oxidative fragmentation of the pentose substrate in the photorespiration process. Both reactions occur simultaneously and in competition at the same active site. The polypeptide is Ribulose bisphosphate carboxylase large chain (Nostoc punctiforme (strain ATCC 29133 / PCC 73102)).